The sequence spans 818 residues: Serine/threonine-protein phosphatase 4 regulatory subunit 3 (818 aa).

Residues 1-100 (MTDTRRRVKV…DEIWEKICQV (100 aa)) form the WH1 domain. The disordered stretch occupies residues 718–818 (LAKSSFSGRQ…PPSKKSRLSS (101 aa)). Positions 721-730 (SSFSGRQNPS) are enriched in polar residues. Low complexity predominate over residues 736–756 (SGSTKTSLSSPPPSASLSPGS). A compositionally biased stretch (acidic residues) spans 788–804 (YPDDDEEEEDDDDEESK).

This sequence belongs to the SMEK family. As to quaternary structure, serine/threonine-protein phosphatase 4 (PP4) occurs in different assemblies of the catalytic and one or more regulatory subunits.

Its function is as follows. Regulatory subunit of serine/threonine-protein phosphatase 4. The sequence is that of Serine/threonine-protein phosphatase 4 regulatory subunit 3 (smek1) from Tetraodon nigroviridis (Spotted green pufferfish).